We begin with the raw amino-acid sequence, 658 residues long: Protein teflon (658 aa).

The C2H2-type 1 zinc finger occupies 33 to 56 (LYCHFCRDLFTQLPEFLRHLQSNH). The disordered stretch occupies residues 80 to 131 (DKAHEDAQSAGHNSSSGDSRSLMNSEDSRAIDGSEENSDNSPVKPEQIGKQN). A compositionally biased stretch (polar residues) spans 89 to 104 (AGHNSSSGDSRSLMNS). C2H2-type zinc fingers lie at residues 608–630 (YFCKWCDDIFILKKEYLKHLISH) and 634–657 (FQCTKCIKVFKYKGYYEKHLRNAH).

It belongs to the Teflon family.

It is found in the nucleus. The protein resides in the chromosome. In terms of biological role, specifically required in males for proper segregation of autosomal bivalents at meiosis I. Expression is required in the male germ line prior to spermatocyte stage S4. May have a role as a bridging molecule maintaining adhesion to hold autosome bivalents together via heterochromatic connections. In Drosophila simulans (Fruit fly), this protein is Protein teflon.